The primary structure comprises 205 residues: Adenylate kinase (205 aa).

Residue Gly-10 to Thr-15 participates in ATP binding. The segment at Ser-30 to Val-59 is NMP. AMP contacts are provided by residues Thr-31, Arg-36, Glu-57–Val-59, Gly-85–Arg-88, and Gln-92. The LID stretch occupies residues Thr-126–Asp-139. Residue Arg-127 participates in ATP binding. AMP contacts are provided by Arg-136 and Arg-147. Lys-175 is an ATP binding site.

The protein belongs to the adenylate kinase family. As to quaternary structure, monomer.

Its subcellular location is the cytoplasm. The enzyme catalyses AMP + ATP = 2 ADP. It participates in purine metabolism; AMP biosynthesis via salvage pathway; AMP from ADP: step 1/1. Its function is as follows. Catalyzes the reversible transfer of the terminal phosphate group between ATP and AMP. Plays an important role in cellular energy homeostasis and in adenine nucleotide metabolism. The protein is Adenylate kinase of Parvibaculum lavamentivorans (strain DS-1 / DSM 13023 / NCIMB 13966).